The chain runs to 377 residues: uncharacterized protein (377 aa).

The next 4 helical transmembrane spans lie at 26–46 (TFQN…VVAI), 67–87 (TVGS…WVII), 108–128 (FLTF…ISLT), and 135–155 (IDYG…ALYI).

The protein resides in the cell membrane. This is an uncharacterized protein from Methanocaldococcus jannaschii (strain ATCC 43067 / DSM 2661 / JAL-1 / JCM 10045 / NBRC 100440) (Methanococcus jannaschii).